Consider the following 461-residue polypeptide: Cysteine--tRNA ligase (461 aa).

Position 28 (C28) interacts with Zn(2+). Positions 30 to 40 match the 'HIGH' region motif; sequence VTIYDLCHIGH. Residues C209, H234, and E238 each contribute to the Zn(2+) site. The short motif at 266 to 270 is the 'KMSKS' region element; it reads KMSKS. Residue K269 coordinates ATP.

Belongs to the class-I aminoacyl-tRNA synthetase family. Monomer. It depends on Zn(2+) as a cofactor.

It localises to the cytoplasm. It catalyses the reaction tRNA(Cys) + L-cysteine + ATP = L-cysteinyl-tRNA(Cys) + AMP + diphosphate. The protein is Cysteine--tRNA ligase of Hamiltonella defensa subsp. Acyrthosiphon pisum (strain 5AT).